The primary structure comprises 595 residues: Aspartate--tRNA(Asp/Asn) ligase (595 aa).

Glu175 is a binding site for L-aspartate. Residues 199–202 are aspartate; the sequence is QQFK. Positions 221 and 451 each coordinate L-aspartate. Residue 221-223 coordinates ATP; it reads RDE. Residue Glu485 participates in ATP binding. Residue Arg492 participates in L-aspartate binding. 537–540 contacts ATP; that stretch reads GVDR.

It belongs to the class-II aminoacyl-tRNA synthetase family. Type 1 subfamily. Homodimer.

It localises to the cytoplasm. It carries out the reaction tRNA(Asx) + L-aspartate + ATP = L-aspartyl-tRNA(Asx) + AMP + diphosphate. Its function is as follows. Aspartyl-tRNA synthetase with relaxed tRNA specificity since it is able to aspartylate not only its cognate tRNA(Asp) but also tRNA(Asn). Reaction proceeds in two steps: L-aspartate is first activated by ATP to form Asp-AMP and then transferred to the acceptor end of tRNA(Asp/Asn). The protein is Aspartate--tRNA(Asp/Asn) ligase of Acidiphilium cryptum (strain JF-5).